The primary structure comprises 284 residues: Heat stress transcription factor B-1 (284 aa).

Residues 12–106 (PAPFLSKTYQ…LLTDIRRRKS (95 aa)) mediate DNA binding. A disordered region spans residues 118 to 151 (VGSPSESNSGGGDDHGSSSTSSPGSSKNPGSVEN). The span at 134 to 148 (SSSTSSPGSSKNPGS) shows a compositional bias: low complexity. The hydrophobic repeat HR-A/B stretch occupies residues 147-192 (GSVENMVADLSGENEKLKRENNNLSSELAAAKKQRDELVTFLTGHL). The Nuclear localization signal motif lies at 247–252 (RKKRDR).

The protein belongs to the HSF family. Class B subfamily. As to quaternary structure, homotrimer. In terms of processing, exhibits temperature-dependent phosphorylation.

It localises to the nucleus. Functionally, transcriptional regulator that specifically binds DNA sequence 5'-AGAAnnTTCT-3' known as heat shock promoter elements (HSE). This Arabidopsis thaliana (Mouse-ear cress) protein is Heat stress transcription factor B-1 (HSFB1).